A 377-amino-acid polypeptide reads, in one-letter code: DNA replication and repair protein RecF (377 aa).

Position 30-37 (30-37 (GNNGSGKS)) interacts with ATP.

Belongs to the RecF family.

The protein localises to the cytoplasm. The RecF protein is involved in DNA metabolism; it is required for DNA replication and normal SOS inducibility. RecF binds preferentially to single-stranded, linear DNA. It also seems to bind ATP. In Colwellia psychrerythraea (strain 34H / ATCC BAA-681) (Vibrio psychroerythus), this protein is DNA replication and repair protein RecF.